Consider the following 631-residue polypeptide: Poly(A)-specific ribonuclease PARN (631 aa).

Residues aspartate 28 and glutamate 30 each contribute to the a divalent metal cation site. Positions 147–173 (EDRRSQSNGASTMSYISPNSSKTPVSI) are disordered. Residues 152–170 (QSNGASTMSYISPNSSKTP) are compositionally biased toward polar residues. Residues 178–244 (KGFIDKVVER…ERYIVISKVD (67 aa)) form the R3H domain. Residues aspartate 291 and aspartate 381 each contribute to the a divalent metal cation site. The tract at residues 568–631 (SPIQEEAASD…SVLFEVPDTW (64 aa)) is disordered.

This sequence belongs to the CAF1 family. As to quaternary structure, component of a complex at least composed of cpeb1, cpsf1, papd4/gld2, pabpc1/ePAB, parn and sympk. A divalent metal cation is required as a cofactor. Post-translationally, a 62 kDa form, which is produced by proteolytic cleavage, also exists. In terms of tissue distribution, in retina, it is constitutively present in most retinal cells, including the photoreceptors.

Its subcellular location is the cytoplasm. It is found in the nucleus. The catalysed reaction is Exonucleolytic cleavage of poly(A) to 5'-AMP.. 3'-exoribonuclease that has a preference for poly(A) tails of mRNAs, thereby efficiently degrading poly(A) tails. Exonucleolytic degradation of the poly(A) tail is often the first step in the decay of eukaryotic mRNAs. Required during meiotic maturation to silence certain maternal mRNAs translationally. Does not require an adenosine residue at the 3' end, however, the addition of 25 non-adenylate residues at the 3' terminus, or a 3' terminal phosphate is inhibitory. Involved in dormant mRNAs regulation during oocyte maturation by counteracting polyadenylation mediated by papd4/gld2nt in immature eggs. During maturation it is excluded from the ribonucleoprotein complex, allowing poly(A) elongation by papd4/gld2nt and activation of mRNAs. This chain is Poly(A)-specific ribonuclease PARN (parn), found in Xenopus laevis (African clawed frog).